Consider the following 1196-residue polypeptide: Truncated transposon Ty1-A Gag-Pol polyprotein (1196 aa).

The 176-residue stretch at N101–P276 folds into the Integrase catalytic domain. Mg(2+) is bound by residues D112 and D177. 3 disordered regions span residues S397 to K528, R533 to P552, and D571 to T628. The span at S401–T410 shows a compositional bias: low complexity. Positions S446–T456 are enriched in polar residues. Over residues E479–S494 the composition is skewed to basic and acidic residues. 2 stretches are compositionally biased toward polar residues: residues Y495–D523 and P542–P552. A Bipartite nuclear localization signal motif is present at residues K619–R653. Residues N779 to Q917 form the Reverse transcriptase Ty1/copia-type domain. D787, D868, D869, D1051, E1093, and D1126 together coordinate Mg(2+). Residues D1051 to K1193 enclose the RNase H Ty1/copia-type domain.

Initially, virus-like particles (VLPs) are composed of the structural unprocessed proteins Gag and Gag-Pol, and also contain the host initiator methionine tRNA (tRNA(i)-Met) which serves as a primer for minus-strand DNA synthesis, and a dimer of genomic Ty RNA. Processing of the polyproteins occurs within the particle and proceeds by an ordered pathway, called maturation. First, the protease (PR) is released by autocatalytic cleavage of the Gag-Pol polyprotein yielding capsid protein p45 and a Pol-p154 precursor protein. This cleavage is a prerequisite for subsequent processing of Pol-p154 at the remaining sites to release the mature structural and catalytic proteins. Maturation takes place prior to the RT reaction and is required to produce transposition-competent VLPs.

The protein localises to the cytoplasm. It is found in the nucleus. It carries out the reaction DNA(n) + a 2'-deoxyribonucleoside 5'-triphosphate = DNA(n+1) + diphosphate. The catalysed reaction is Endonucleolytic cleavage to 5'-phosphomonoester.. Its function is as follows. Reverse transcriptase/ribonuclease H (RT) is a multifunctional enzyme that catalyzes the conversion of the retro-elements RNA genome into dsDNA within the VLP. The enzyme displays a DNA polymerase activity that can copy either DNA or RNA templates, and a ribonuclease H (RNase H) activity that cleaves the RNA strand of RNA-DNA heteroduplexes during plus-strand synthesis and hydrolyzes RNA primers. The conversion leads to a linear dsDNA copy of the retrotransposon that includes long terminal repeats (LTRs) at both ends. Functionally, integrase (IN) targets the VLP to the nucleus, where a subparticle preintegration complex (PIC) containing at least integrase and the newly synthesized dsDNA copy of the retrotransposon must transit the nuclear membrane. Once in the nucleus, integrase performs the integration of the dsDNA into the host genome. The sequence is that of Truncated transposon Ty1-A Gag-Pol polyprotein (TY1B-A) from Saccharomyces cerevisiae (strain ATCC 204508 / S288c) (Baker's yeast).